Reading from the N-terminus, the 441-residue chain is MIRGKIDILVVDDDVSHCTILQALLRGWGYNVALAYSGHDALAQVREKVFDLVLCDVRMAEMDGIATLKEIKALNPAIPILIMTAFSSVETAVEALKAGALDYLIKPLDFDRLQETLEKALAHTRETGAELPSASAAQFGMIGSSPAMQHLLNEIAMVAPSDATVLIHGDSGTGKELVARALHACSARSDRPLVTLNCAALNESLLESELFGHEKGAFTGADKRREGRFVEADGGTLFLDEIGDISPLMQVRLLRAIQEREVQRVGSNQTISVDVRLIAATHRDLAEEVSAGRFRQDLYYRLNVVAIEMPSLRQRREDIPLLADHFLRRFAERNRKVVKGFTPQAMDLLIHYDWPGNIRELENAIERAVVLLTGEYISERELPLAIAATPIKTEYSGEIQPLVDVEKEVILAALEKTGGNKTEAARQLGITRKTLLAKLSR.

Positions 7–121 (DILVVDDDVS…RLQETLEKAL (115 aa)) constitute a Response regulatory domain. Position 56 is a 4-aspartylphosphate (D56). In terms of domain architecture, Sigma-54 factor interaction spans 141–370 (MIGSSPAMQH…LENAIERAVV (230 aa)). Residues G172, T173, R329, and R359 each contribute to the ATP site. Residues 421 to 440 (KTEAARQLGITRKTLLAKLS) constitute a DNA-binding region (H-T-H motif).

In terms of assembly, forms homohexamers in the crystal structure. However, the dimerization interface between DNA-binding domains observed in the crystal structure suggests that dodecamers, rather than hexamers, might be the functionally important oligomer. Phosphorylated by ZraS.

It is found in the cytoplasm. Its activity is regulated as follows. Activity of the ZraS/ZraR two-component system is repressed by the zinc-bound form of ZraP, which probably interacts with the periplasmic region of ZraS. Its function is as follows. Part of the Zra signaling pathway, an envelope stress response (ESR) system composed of the periplasmic accessory protein ZraP, the histidine kinase ZraS and the transcriptional regulator ZraR. The ZraPSR system contributes to antibiotic resistance and is important for membrane integrity in the presence of membrane-targeting biocides. ZraR is a member of the two-component regulatory system ZraS/ZraR. When activated by ZraS, acts in conjunction with sigma-54 to regulate the expression of zraP in the presence of high Zn(2+) or Pb(2+) concentrations. Also positively autoregulates the expression of the zraSR operon. The chain is Transcriptional regulatory protein ZraR from Salmonella typhimurium (strain LT2 / SGSC1412 / ATCC 700720).